A 314-amino-acid polypeptide reads, in one-letter code: tRNA pseudouridine synthase B (314 aa).

Histidine 43 is a substrate binding site. The Nucleophile role is filled by aspartate 48. Residues tyrosine 76, tyrosine 179, and leucine 200 each coordinate substrate.

Belongs to the pseudouridine synthase TruB family. Type 1 subfamily.

It catalyses the reaction uridine(55) in tRNA = pseudouridine(55) in tRNA. Its function is as follows. Responsible for synthesis of pseudouridine from uracil-55 in the psi GC loop of transfer RNAs. The protein is tRNA pseudouridine synthase B of Cronobacter sakazakii (strain ATCC BAA-894) (Enterobacter sakazakii).